Consider the following 305-residue polypeptide: uncharacterized protein (305 aa).

This is an uncharacterized protein from Methanocaldococcus jannaschii (strain ATCC 43067 / DSM 2661 / JAL-1 / JCM 10045 / NBRC 100440) (Methanococcus jannaschii).